A 215-amino-acid polypeptide reads, in one-letter code: Myelin protein zero-like protein 2 (215 aa).

The N-terminal stretch at 1–26 (MYGKSPALVLPLLLSLQLTALCPTEA) is a signal peptide. An Ig-like V-type domain is found at 27–141 (VEIYTSGALE…DGLVGTIRLS (115 aa)). The Extracellular segment spans residues 27–154 (VEIYTSGALE…TVPFSEIYFL (128 aa)). Residues Asn-39 and Asn-118 are each glycosylated (N-linked (GlcNAc...) asparagine). Cys-47 and Cys-123 are oxidised to a cystine. A helical transmembrane segment spans residues 155–175 (AVAIGSACALMIIVVIVVVLF). Residues 176–215 (QHFRKKRWADRADKAEGTKSKEEEKLNQGNKVSVFVEDTD) are Cytoplasmic-facing. The segment covering 187 to 201 (ADKAEGTKSKEEEKL) has biased composition (basic and acidic residues). A disordered region spans residues 187-215 (ADKAEGTKSKEEEKLNQGNKVSVFVEDTD).

This sequence belongs to the myelin P0 protein family. As to expression, widely expressed. Expressed in the cochlea, in Deiters' cells, possibly at contact sites with the basilar membrane. Expressed in both outer and inner auditory hair cells. In the stria vascularis, detected in the basal cell layer. Not detected in thymocytes, lymphocytes, macrophage or dendritic cells.

It localises to the membrane. Its function is as follows. Mediates homophilic cell-cell adhesion. This Mus musculus (Mouse) protein is Myelin protein zero-like protein 2 (Mpzl2).